The following is a 172-amino-acid chain: Myosin regulatory light chain 12B (172 aa).

The span at 1-16 (MSSKKAKTKTTKKRPQ) shows a compositional bias: basic residues. The interval 1–20 (MSSKKAKTKTTKKRPQRATS) is disordered. Thr-19 is modified (phosphothreonine; by MLCK and ZIPK/DAPK3). Ser-20 is subject to Phosphoserine; by MLCK and ZIPK/DAPK3. 3 consecutive EF-hand domains span residues 29–64 (SQIQEFKEAFNMIDQNRDGFIDKEDLHDMLASLGKN), 98–133 (DPEDVIRNAFACFDEEATGTIQEDYLRELLTTMGDR), and 134–169 (FTDEEVDELYREAPIDKKGNFNYIEFTRILKHGAKD). 4 residues coordinate Ca(2+): Asp-42, Asn-44, Asp-46, and Asp-53.

In terms of assembly, myosin is a hexamer of 2 heavy chains and 4 light chains: interacts with myosin heavy chain MYO19. Phosphorylation increases the actin-activated myosin ATPase activity and thereby regulates the contractile activity. It is required to generate the driving force in the migration of the cells but not necessary for localization of myosin-2 at the leading edge. Phosphorylation is reduced following epigallocatechin-3-O-gallate treatment. In terms of tissue distribution, ubiquitously expressed in various hematopoietic cells.

Functionally, myosin regulatory subunit that plays an important role in regulation of both smooth muscle and nonmuscle cell contractile activity via its phosphorylation. Phosphorylation triggers actin polymerization in vascular smooth muscle. Implicated in cytokinesis, receptor capping, and cell locomotion. This Homo sapiens (Human) protein is Myosin regulatory light chain 12B (MYL12B).